Here is a 521-residue protein sequence, read N- to C-terminus: Cytochrome P450 1A1 (521 aa).

Phe-229 lines the substrate pocket. Cys-463 contacts heme.

The protein belongs to the cytochrome P450 family. Heme serves as cofactor.

The protein resides in the endoplasmic reticulum membrane. It is found in the microsome membrane. The catalysed reaction is an organic molecule + reduced [NADPH--hemoprotein reductase] + O2 = an alcohol + oxidized [NADPH--hemoprotein reductase] + H2O + H(+). Functionally, cytochromes P450 are a group of heme-thiolate monooxygenases. They oxidize a variety of structurally unrelated compounds, including steroids, fatty acids, and xenobiotics. The protein is Cytochrome P450 1A1 (cyp1a1) of Chaetodon capistratus (Four-eye butterflyfish).